A 462-amino-acid chain; its full sequence is Argininosuccinate lyase (462 aa).

This sequence belongs to the lyase 1 family. Argininosuccinate lyase subfamily.

The protein localises to the cytoplasm. The catalysed reaction is 2-(N(omega)-L-arginino)succinate = fumarate + L-arginine. It functions in the pathway amino-acid biosynthesis; L-arginine biosynthesis; L-arginine from L-ornithine and carbamoyl phosphate: step 3/3. The protein is Argininosuccinate lyase of Xanthobacter autotrophicus (strain ATCC BAA-1158 / Py2).